A 144-amino-acid chain; its full sequence is Large ribosomal subunit protein uL16 (144 aa).

Residues 1–16 (MLVPKRVKHRKVQRGK) show a composition bias toward basic residues. The disordered stretch occupies residues 1–20 (MLVPKRVKHRKVQRGKMRGE).

It belongs to the universal ribosomal protein uL16 family. In terms of assembly, part of the 50S ribosomal subunit.

In terms of biological role, binds 23S rRNA and is also seen to make contacts with the A and possibly P site tRNAs. In Limosilactobacillus fermentum (strain NBRC 3956 / LMG 18251) (Lactobacillus fermentum), this protein is Large ribosomal subunit protein uL16.